A 1037-amino-acid polypeptide reads, in one-letter code: Sentrin-specific protease 7 (1037 aa).

Residues 1–10 are compositionally biased toward basic residues; that stretch reads MDRARPGRRR. Disordered regions lie at residues 1 to 28 and 182 to 420; these read MDRA…SPAD and ASLS…SEEN. 4 positions are modified to phosphoserine: S12, S13, S25, and S189. Polar residues-rich tracts occupy residues 182-211 and 253-263; these read ASLS…NVNH and TPQSKDFNSGN. Basic residues predominate over residues 289-299; sequence VSRKRKKRGRS. The span at 300-309 shows a compositional bias: polar residues; the sequence is NFHNSHNPKS. Basic and acidic residues-rich tracts occupy residues 310-320 and 330-340; these read SVDKSTEYIKE and KLEESNEDSHQ. Low complexity predominate over residues 381-399; the sequence is NKSSESSVSSEVAENSSAA. S432 and S433 each carry phosphoserine. The tract at residues 747-1037 is protease; it reads LGVTNEDLEC…HLQQQKGSSS (291 aa). Residue H847 is part of the active site. Residues 873–910 are disordered; sequence EFQDQQSQHDNKTIDNDPHTTSTVFTSAEESQSTETSM. A compositionally biased stretch (basic and acidic residues) spans 879–890; sequence SQHDNKTIDNDP. The segment covering 898–910 has biased composition (low complexity); the sequence is TSAEESQSTETSM. The active site involves D926. Residue C979 is the Nucleophile of the active site.

It belongs to the peptidase C48 family.

The protein localises to the cytoplasm. Protease that acts as a positive regulator of the cGAS-STING pathway by catalyzing desumoylation of CGAS. Desumoylation of CGAS promotes DNA-binding activity of CGAS, subsequent oligomerization and activation. Deconjugates SUMO2 and SUMO3 from targeted proteins, but not SUMO1. Catalyzes the deconjugation of poly-SUMO2 and poly-SUMO3 chains. Has very low efficiency in processing full-length SUMO proteins to their mature forms. In Rattus norvegicus (Rat), this protein is Sentrin-specific protease 7 (Senp7).